Reading from the N-terminus, the 599-residue chain is Elongation factor 4 (599 aa).

One can recognise a tr-type G domain in the interval 2-184; that stretch reads NYKRNFSIIA…RLVRDIPAPK (183 aa). GTP-binding positions include 14–19 and 131–134; these read DHGKST and NKID.

Belongs to the TRAFAC class translation factor GTPase superfamily. Classic translation factor GTPase family. LepA subfamily.

The protein localises to the cell membrane. It carries out the reaction GTP + H2O = GDP + phosphate + H(+). Functionally, required for accurate and efficient protein synthesis under certain stress conditions. May act as a fidelity factor of the translation reaction, by catalyzing a one-codon backward translocation of tRNAs on improperly translocated ribosomes. Back-translocation proceeds from a post-translocation (POST) complex to a pre-translocation (PRE) complex, thus giving elongation factor G a second chance to translocate the tRNAs correctly. Binds to ribosomes in a GTP-dependent manner. In Hamiltonella defensa subsp. Acyrthosiphon pisum (strain 5AT), this protein is Elongation factor 4.